A 542-amino-acid polypeptide reads, in one-letter code: Plasminogen-binding protein PgbB (542 aa).

A disordered region spans residues 399-542 (KSASKKSQKG…RRKALEMNKK (144 aa)). 2 stretches are compositionally biased toward basic and acidic residues: residues 418–435 (QERH…ENKV) and 447–456 (VKTRRPEPIR). Residues 457–467 (DQNNATQQGET) show a composition bias toward polar residues. Over residues 481 to 542 (NAAKKEVPKP…RRKALEMNKK (62 aa)) the composition is skewed to basic and acidic residues.

It is found in the cell surface. Binds plasminogen, specifically, and in a concentration and lysine-dependent manner. Plasminogen is the precursor of plasmin, a serine protease that cleaves fibrin, fibronectin, laminin and vitronectin. Acquisition of plasminogen/plasmin could enable H.pylori to degrade host components. This is Plasminogen-binding protein PgbB (pgbB) from Helicobacter pylori (strain ATCC 700392 / 26695) (Campylobacter pylori).